We begin with the raw amino-acid sequence, 198 residues long: Photosystem I assembly protein Ycf4 (198 aa).

2 consecutive transmembrane segments (helical) span residues 35 to 57 and 70 to 92; these read WFYNIVMLLGGIGFLIVGISSYI and IIFFPQGITMCFYGTCGILFSIN.

Belongs to the Ycf4 family.

Its subcellular location is the plastid. It localises to the chloroplast thylakoid membrane. In terms of biological role, seems to be required for the assembly of the photosystem I complex. The polypeptide is Photosystem I assembly protein Ycf4 (Euglena gracilis).